Reading from the N-terminus, the 184-residue chain is ADP-ribosylation factor-like protein 3 (184 aa).

The N-myristoyl glycine moiety is linked to residue Gly-2. Residues 24 to 31 (GLDNAGKT), 68 to 72 (DIGGQ), and 127 to 130 (NKQD) contribute to the GTP site.

This sequence belongs to the small GTPase superfamily. Arf family.

It localises to the golgi apparatus. Its function is as follows. GTP-binding protein that may be involved in protein trafficking; may modulate vesicle budding and uncoating within the Golgi apparatus. The polypeptide is ADP-ribosylation factor-like protein 3 (arl-3) (Caenorhabditis elegans).